The chain runs to 145 residues: Class I hydrophobin 1 (145 aa).

Residues 1–18 form the signal peptide; it reads MYASVIIYTLVALCGVMS. Cystine bridges form between C88–C118, C95–C112, C96–C106, and C119–C128. N108 is a glycosylation site (N-linked (GlcNAc...) asparagine).

The protein belongs to the fungal hydrophobin family. Self-assembles to form functional amyloid fibrils called rodlets. Self-assembly into fibrillar rodlets occurs spontaneously at hydrophobic:hydrophilic interfaces and the rodlets further associate laterally to form amphipathic monolayers.

It localises to the secreted. The protein localises to the cell wall. In terms of biological role, aerial growth, conidiation, and dispersal of filamentous fungi in the environment rely upon a capability of their secreting small amphipathic proteins called hydrophobins (HPBs) with low sequence identity. Class I can self-assemble into an outermost layer of rodlet bundles on aerial cell surfaces, conferring cellular hydrophobicity that supports fungal growth, development and dispersal; whereas Class II form highly ordered films at water-air interfaces through intermolecular interactions but contribute nothing to the rodlet structure. Hyd1 is a class I hydrophobin that is involved in plant root attachment and colonization, and that might also protect the growing hyphae from locally synthesized plant defense compounds during the first stages of cucumber interaction, allowing this opportunistic, non-pathogenic fungus to colonize the intercellular spaces of the plant root. This Trichoderma asperellum (Filamentous fungus) protein is Class I hydrophobin 1.